A 142-amino-acid chain; its full sequence is Maximins y/H11 (142 aa).

Residues 1–18 (MNFKYIVAVSFLITSGYA) form the signal peptide. The propeptide occupies 19–43 (ESVKNDEQSLSQRDVLEEESLREIR). The residue at position 68 (Phe-68) is a Phenylalanine amide. The propeptide occupies 72-121 (SAEDHEVMKRLEAVIRDLDSLDHPEEASERETRGFNQEEIANLFTKKEKR). Position 141 is an isoleucine amide (Ile-141).

The protein belongs to the bombinin family. As to expression, expressed by the skin glands.

It is found in the secreted. Maximin-y shows antimicrobial activity against bacteria and against the fungus C.albicans. It has little hemolytic activity. Its function is as follows. Maximin-H11 shows antimicrobial activity against bacteria and against the fungus C.albicans. Shows strong hemolytic activity. This Bombina maxima (Giant fire-bellied toad) protein is Maximins y/H11.